Reading from the N-terminus, the 2324-residue chain is Myomegalin (2324 aa).

Coiled coils occupy residues arginine 41–alanine 132, glutamine 158–glutamate 205, aspartate 238–glutamate 288, and leucine 348–alanine 638. 2 disordered regions span residues threonine 72 to glutamine 96 and glutamate 205 to histidine 240. Over residues alanine 85–glutamine 96 the composition is skewed to basic and acidic residues. Positions proline 219–aspartate 238 are enriched in polar residues. A disordered region spans residues proline 701–serine 747. The residue at position 705 (threonine 705) is a Phosphothreonine. The segment covering serine 724–serine 738 has biased composition (basic and acidic residues). Coiled-coil stretches lie at residues glycine 745–aspartate 822, glutamate 855–leucine 923, and leucine 1011–serine 1043. 2 disordered regions span residues leucine 1155 to leucine 1182 and asparagine 1195 to histidine 1216. 3 coiled-coil regions span residues serine 1213 to threonine 1241, threonine 1346 to threonine 1384, and glycine 1430 to glycine 1455. Disordered stretches follow at residues threonine 1540–alanine 1559, arginine 1589–serine 1610, tyrosine 1628–proline 1685, alanine 1742–arginine 1773, leucine 1857–serine 1877, and asparagine 2081–lysine 2140. An Olduvai domain is found at lysine 1550–serine 1641. Composition is skewed to low complexity over residues serine 1591 to serine 1610 and serine 1637 to serine 1646. Residues proline 1743–glutamine 1767 are compositionally biased toward polar residues. Residues glycine 1821–aspartate 2056 are a coiled coil. Composition is skewed to polar residues over residues asparagine 2081–alanine 2090 and proline 2108–threonine 2135. Residues glutamate 2248–threonine 2274 adopt a coiled-coil conformation.

Interacts with PDE4D. May interact with MAPRE1 and MAPRE3. May form a pericentrosomal complex with AKAP9, CDK5RAP2 and EB1/MAPRE1 in an isoform-specific manner; within this complex, may mediate MAPRE1-binding to CDK5RAP2. Interaction with AKAP9 stabilizes both proteins. May interact with CAMSAP2 in an isoform-specific manner; this interaction is much stronger in the presence of AKAP9. In complex with AKAP9, recruits CAMSAP2 to the Golgi apparatus. May interact with unglycosylated LGALS3BP in an isoform-specific manner; this interaction may connect the pericentrosomal complex to the gamma-tubulin ring complex (gamma-TuRC) to promote microtubule assembly and acetylation. As to expression, abundantly expressed in heart and skeletal muscle and to a lower extent in brain, lung and liver. Expressed in heart, skeletal muscle and testis (at protein level).

It is found in the cytoplasm. Its subcellular location is the cytoskeleton. The protein resides in the microtubule organizing center. The protein localises to the centrosome. It localises to the golgi apparatus. In terms of biological role, functions as an anchor sequestering components of the cAMP-dependent pathway to Golgi and/or centrosomes. May participate in microtubule dynamics, promoting microtubule assembly, in an isoform-specific manner. Depending upon the cell context, may act at the level of the Golgi apparatus or that of the centrosome. In complex with AKAP9, recruits CAMSAP2 to the Golgi apparatus and tethers non-centrosomal minus-end microtubules to the Golgi, an important step for polarized cell movement. In complex with AKAP9, EB1/MAPRE1 and CDK5RAP2, contributes to microtubules nucleation and extension from the centrosome to the cell periphery, a crucial process for directed cell migration, mitotic spindle orientation and cell-cycle progression. This Rattus norvegicus (Rat) protein is Myomegalin (Pde4dip).